Reading from the N-terminus, the 334-residue chain is Anthranilate phosphoribosyltransferase (334 aa).

Residues Gly79, 82–83, Ser87, 89–92, 107–115, and Ser119 contribute to the 5-phospho-alpha-D-ribose 1-diphosphate site; these read GD, NIST, and KAGNRSISS. Residue Gly79 participates in anthranilate binding. Ser91 lines the Mg(2+) pocket. Anthranilate is bound at residue Asn110. Arg165 is a binding site for anthranilate. Asp224 and Glu225 together coordinate Mg(2+).

Belongs to the anthranilate phosphoribosyltransferase family. In terms of assembly, homodimer. The cofactor is Mg(2+).

It catalyses the reaction N-(5-phospho-beta-D-ribosyl)anthranilate + diphosphate = 5-phospho-alpha-D-ribose 1-diphosphate + anthranilate. It participates in amino-acid biosynthesis; L-tryptophan biosynthesis; L-tryptophan from chorismate: step 2/5. Its function is as follows. Catalyzes the transfer of the phosphoribosyl group of 5-phosphorylribose-1-pyrophosphate (PRPP) to anthranilate to yield N-(5'-phosphoribosyl)-anthranilate (PRA). The chain is Anthranilate phosphoribosyltransferase from Streptococcus thermophilus (strain ATCC BAA-491 / LMD-9).